The sequence spans 273 residues: Bis(5'-nucleosyl)-tetraphosphatase, symmetrical (273 aa).

Belongs to the Ap4A hydrolase family.

The catalysed reaction is P(1),P(4)-bis(5'-adenosyl) tetraphosphate + H2O = 2 ADP + 2 H(+). In terms of biological role, hydrolyzes diadenosine 5',5'''-P1,P4-tetraphosphate to yield ADP. This Proteus mirabilis (strain HI4320) protein is Bis(5'-nucleosyl)-tetraphosphatase, symmetrical.